Reading from the N-terminus, the 342-residue chain is Protein pelota homolog (342 aa).

It belongs to the eukaryotic release factor 1 family. Pelota subfamily. In terms of assembly, monomer. Requires a divalent metal cation as cofactor.

It localises to the cytoplasm. May function in recognizing stalled ribosomes, interact with stem-loop structures in stalled mRNA molecules, and effect endonucleolytic cleavage of the mRNA. May play a role in the release non-functional ribosomes and degradation of damaged mRNAs. Has endoribonuclease activity. The polypeptide is Protein pelota homolog (Sulfolobus acidocaldarius (strain ATCC 33909 / DSM 639 / JCM 8929 / NBRC 15157 / NCIMB 11770)).